The following is a 275-amino-acid chain: Large ribosomal subunit protein uL2 (275 aa).

Residues Ala224 to Lys275 form a disordered region. The segment covering Lys264 to Lys275 has biased composition (basic and acidic residues).

Belongs to the universal ribosomal protein uL2 family. Part of the 50S ribosomal subunit. Forms a bridge to the 30S subunit in the 70S ribosome.

One of the primary rRNA binding proteins. Required for association of the 30S and 50S subunits to form the 70S ribosome, for tRNA binding and peptide bond formation. It has been suggested to have peptidyltransferase activity; this is somewhat controversial. Makes several contacts with the 16S rRNA in the 70S ribosome. The protein is Large ribosomal subunit protein uL2 of Thermoanaerobacter pseudethanolicus (strain ATCC 33223 / 39E) (Clostridium thermohydrosulfuricum).